The following is a 471-amino-acid chain: 6-phosphofructo-2-kinase/fructose-2,6-bisphosphatase 1 (471 aa).

Ser2 is modified (N-acetylserine). Positions 2 to 250 are 6-phosphofructo-2-kinase; it reads SPEMGELTQT…VYYLMNIHVT (249 aa). The residue at position 33 (Ser33) is a Phosphoserine; by PKA. 49-57 serves as a coordination point for ATP; it reads GLPARGKTY. Residues Arg82 and Arg105 each coordinate beta-D-fructose 6-phosphate. Residue Asp131 is part of the active site. Thr133 and Arg139 together coordinate beta-D-fructose 6-phosphate. At Ser141 the chain carries Phosphoserine. Cys161 is a catalytic residue. An ATP-binding site is contributed by 170–175; the sequence is NIRQVK. Beta-D-fructose 6-phosphate-binding residues include Lys175, Arg196, and Tyr200. The interval 251 to 471 is fructose-2,6-bisphosphatase; sequence PRSIYLCRHG…EALDTVPAHY (221 aa). Arg258 is a beta-D-fructose 2,6-bisphosphate binding site. The active-site Tele-phosphohistidine intermediate is His259. Residues Asn265, Gly271, and Arg308 each contribute to the beta-D-fructose 2,6-bisphosphate site. Glu328 (proton donor/acceptor) is an active-site residue. Beta-D-fructose 2,6-bisphosphate-binding residues include Tyr339, Arg353, Lys357, Tyr368, Gln394, and Arg398. 350 to 353 is a binding site for ATP; the sequence is FALR. Residues 394–398 and Tyr430 contribute to the ATP site; that span reads QAVMR.

It in the C-terminal section; belongs to the phosphoglycerate mutase family. Homodimer. Liver.

It catalyses the reaction beta-D-fructose 2,6-bisphosphate + H2O = beta-D-fructose 6-phosphate + phosphate. The catalysed reaction is beta-D-fructose 6-phosphate + ATP = beta-D-fructose 2,6-bisphosphate + ADP + H(+). With respect to regulation, phosphorylation at Ser-33 inhibits the kinase and activates the bisphosphatase. In terms of biological role, synthesis and degradation of fructose 2,6-bisphosphate. In Homo sapiens (Human), this protein is 6-phosphofructo-2-kinase/fructose-2,6-bisphosphatase 1.